Reading from the N-terminus, the 690-residue chain is Eukaryotic translation initiation factor 3 subunit B (690 aa).

Residues 1–11 show a composition bias toward basic and acidic residues; it reads MAKKKSEDHSG. The interval 1–33 is disordered; sequence MAKKKSEDHSGADANDSDYNEEPNFDDPPNFVD. Acidic residues predominate over residues 15-25; it reads NDSDYNEEPNF. Residues 57 to 141 enclose the RRM domain; the sequence is SVVVVDNMPK…YTFAVNLFTD (85 aa). WD repeat units lie at residues 207–246, 292–331, 334–369, 442–484, and 530–575; these read TRER…KIQK, GDGM…LLDL, IKIP…TLMK, EIRE…KPSL, and PDHF…IKRT. The stretch at 613–646 forms a coiled coil; the sequence is EQKDRLRLTRASKELLEKRAQLRETFMEYRNKRI.

Belongs to the eIF-3 subunit B family. Component of the eukaryotic translation initiation factor 3 (eIF-3) complex. The eIF-3 complex interacts with pix. Interacts with mxt.

The protein localises to the cytoplasm. In terms of biological role, RNA-binding component of the eukaryotic translation initiation factor 3 (eIF-3) complex, which is involved in protein synthesis of a specialized repertoire of mRNAs and, together with other initiation factors, stimulates binding of mRNA and methionyl-tRNAi to the 40S ribosome. The eIF-3 complex specifically targets and initiates translation of a subset of mRNAs involved in cell proliferation. This Drosophila grimshawi (Hawaiian fruit fly) protein is Eukaryotic translation initiation factor 3 subunit B.